We begin with the raw amino-acid sequence, 130 residues long: Small ribosomal subunit protein uS9 (130 aa).

This sequence belongs to the universal ribosomal protein uS9 family.

This Magnetococcus marinus (strain ATCC BAA-1437 / JCM 17883 / MC-1) protein is Small ribosomal subunit protein uS9.